A 442-amino-acid polypeptide reads, in one-letter code: Cyclic AMP receptor-like protein B (442 aa).

Topologically, residues 1-16 are extracellular; sequence MGGDIHLCSMILGKNH. The helical transmembrane segment at 17 to 37 threads the bilayer; the sequence is LIFLYFANLFGSTLSFLATII. The Cytoplasmic portion of the chain corresponds to 38–219; the sequence is TIVFYLVKKY…PKKIDTLIFY (182 aa). The disordered stretch occupies residues 83-166; that stretch reads YSSTPISIQN…LSSSDKNNTI (84 aa). Over residues 91-103 the composition is skewed to low complexity; sequence QNNNNKNNNLPKQ. A compositionally biased stretch (polar residues) spans 112 to 122; that stretch reads INKNHNNYCNY. Over residues 123–144 the composition is skewed to low complexity; the sequence is STSATSSSSSSSSFSSTNSGSS. Over residues 145 to 166 the composition is skewed to polar residues; that stretch reads YEYQQPQKNQQTLSSSDKNNTI. Residues 220 to 240 traverse the membrane as a helical segment; the sequence is LSISDFIAVSGIIIEQLIIIF. Topologically, residues 241–255 are extracellular; the sequence is NKEISKSIGFCIGER. A helical membrane pass occupies residues 256-276; sequence VSIHFGLLATLFWSNCIAYYL. The Cytoplasmic segment spans residues 277–289; it reads LRETYELKPYNIR. Residues 290-310 form a helical membrane-spanning segment; that stretch reads FVYFHIVCWGMALIGVASLFF. Over 311 to 334 the chain is Extracellular; that stretch reads SKIITVSNIDQGGSWCSVSSSYQL. The chain crosses the membrane as a helical span at residues 335–355; it reads YFWVIPLFVSFTWNLICYCLI. The Cytoplasmic portion of the chain corresponds to 356–382; sequence YRKFNKIIGIYGIQSVQIKTIIIRKLS. A helical transmembrane segment spans residues 383 to 403; the sequence is FYLLAFLITWVWDVINNSIFL. Residues 404–410 are Extracellular-facing; sequence YEGKCPP. Residues 411–431 traverse the membrane as a helical segment; it reads FALWILQEFFSSGYGFFNSLA. Over 432–442 the chain is Cytoplasmic; that stretch reads YAVTTRFYSRK.

Belongs to the G-protein coupled receptor 5 family.

Its subcellular location is the membrane. In terms of biological role, receptor for cAMP. The protein is Cyclic AMP receptor-like protein B (crlB) of Dictyostelium discoideum (Social amoeba).